Consider the following 256-residue polypeptide: Thiazole synthase (256 aa).

K95 serves as the catalytic Schiff-base intermediate with DXP. Residues G156, 182 to 183 (AG), and 204 to 205 (NT) each bind 1-deoxy-D-xylulose 5-phosphate.

The protein belongs to the ThiG family. In terms of assembly, homotetramer. Forms heterodimers with either ThiH or ThiS.

The protein resides in the cytoplasm. The enzyme catalyses [ThiS sulfur-carrier protein]-C-terminal-Gly-aminoethanethioate + 2-iminoacetate + 1-deoxy-D-xylulose 5-phosphate = [ThiS sulfur-carrier protein]-C-terminal Gly-Gly + 2-[(2R,5Z)-2-carboxy-4-methylthiazol-5(2H)-ylidene]ethyl phosphate + 2 H2O + H(+). It functions in the pathway cofactor biosynthesis; thiamine diphosphate biosynthesis. Its function is as follows. Catalyzes the rearrangement of 1-deoxy-D-xylulose 5-phosphate (DXP) to produce the thiazole phosphate moiety of thiamine. Sulfur is provided by the thiocarboxylate moiety of the carrier protein ThiS. In vitro, sulfur can be provided by H(2)S. This Salmonella typhi protein is Thiazole synthase.